The sequence spans 394 residues: Phosphopentomutase (394 aa).

Mn(2+)-binding residues include Asp14, Asp287, His292, Asp328, His329, and His340.

The protein belongs to the phosphopentomutase family. The cofactor is Mn(2+).

The protein resides in the cytoplasm. The catalysed reaction is 2-deoxy-alpha-D-ribose 1-phosphate = 2-deoxy-D-ribose 5-phosphate. The enzyme catalyses alpha-D-ribose 1-phosphate = D-ribose 5-phosphate. It functions in the pathway carbohydrate degradation; 2-deoxy-D-ribose 1-phosphate degradation; D-glyceraldehyde 3-phosphate and acetaldehyde from 2-deoxy-alpha-D-ribose 1-phosphate: step 1/2. Isomerase that catalyzes the conversion of deoxy-ribose 1-phosphate (dRib-1-P) and ribose 1-phosphate (Rib-1-P) to deoxy-ribose 5-phosphate (dRib-5-P) and ribose 5-phosphate (Rib-5-P), respectively. The chain is Phosphopentomutase from Listeria monocytogenes serotype 4a (strain HCC23).